The following is a 326-amino-acid chain: Putative replication protein B (326 aa).

This sequence belongs to the ParB family.

In Sinorhizobium fredii (strain NBRC 101917 / NGR234), this protein is Putative replication protein B.